Here is a 336-residue protein sequence, read N- to C-terminus: Inositol 2-dehydrogenase (336 aa).

Belongs to the Gfo/Idh/MocA family. Homotetramer.

It carries out the reaction myo-inositol + NAD(+) = scyllo-inosose + NADH + H(+). In terms of biological role, involved in the oxidation of myo-inositol (MI) to 2-keto-myo-inositol (2KMI or 2-inosose). The protein is Inositol 2-dehydrogenase of Pseudomonas fluorescens (strain ATCC BAA-477 / NRRL B-23932 / Pf-5).